The sequence spans 469 residues: Glutamate--tRNA ligase (469 aa).

A 'HIGH' region motif is present at residues 9–19; sequence PSPTGFLHVGG. Zn(2+) contacts are provided by cysteine 98, cysteine 100, cysteine 125, and aspartate 127. A 'KMSKS' region motif is present at residues 236–240; the sequence is KLSKR. Lysine 239 is a binding site for ATP.

It belongs to the class-I aminoacyl-tRNA synthetase family. Glutamate--tRNA ligase type 1 subfamily. Monomer. Zn(2+) is required as a cofactor.

The protein resides in the cytoplasm. The enzyme catalyses tRNA(Glu) + L-glutamate + ATP = L-glutamyl-tRNA(Glu) + AMP + diphosphate. Catalyzes the attachment of glutamate to tRNA(Glu) in a two-step reaction: glutamate is first activated by ATP to form Glu-AMP and then transferred to the acceptor end of tRNA(Glu). This Shewanella sediminis (strain HAW-EB3) protein is Glutamate--tRNA ligase.